The following is a 97-amino-acid chain: Large ribosomal subunit protein bL28 (97 aa).

The protein belongs to the bacterial ribosomal protein bL28 family.

In Rickettsia typhi (strain ATCC VR-144 / Wilmington), this protein is Large ribosomal subunit protein bL28.